The primary structure comprises 431 residues: Adenylosuccinate synthetase (431 aa).

GTP-binding positions include 12-18 (GDEGKGK) and 40-42 (GHT). D13 (proton acceptor) is an active-site residue. Mg(2+)-binding residues include D13 and G40. IMP contacts are provided by residues 13-16 (DEGK), 38-41 (NAGH), T131, R145, Q225, T240, and R304. Residue H41 is the Proton donor of the active site. 300–306 (TTTGRKR) is a binding site for substrate. GTP contacts are provided by residues R306, 332-334 (KLD), and 414-416 (STS).

It belongs to the adenylosuccinate synthetase family. Homodimer. Mg(2+) is required as a cofactor.

It is found in the cytoplasm. The enzyme catalyses IMP + L-aspartate + GTP = N(6)-(1,2-dicarboxyethyl)-AMP + GDP + phosphate + 2 H(+). It functions in the pathway purine metabolism; AMP biosynthesis via de novo pathway; AMP from IMP: step 1/2. In terms of biological role, plays an important role in the de novo pathway of purine nucleotide biosynthesis. Catalyzes the first committed step in the biosynthesis of AMP from IMP. This chain is Adenylosuccinate synthetase, found in Dinoroseobacter shibae (strain DSM 16493 / NCIMB 14021 / DFL 12).